We begin with the raw amino-acid sequence, 189 residues long: dCTP deaminase (189 aa).

DCTP-binding positions include 112–117 (KSTYAR), 136–138 (TLE), Q157, Y171, and Q181. The active-site Proton donor/acceptor is E138.

It belongs to the dCTP deaminase family. As to quaternary structure, homotrimer.

The catalysed reaction is dCTP + H2O + H(+) = dUTP + NH4(+). It participates in pyrimidine metabolism; dUMP biosynthesis; dUMP from dCTP (dUTP route): step 1/2. In terms of biological role, catalyzes the deamination of dCTP to dUTP. The chain is dCTP deaminase from Acinetobacter baylyi (strain ATCC 33305 / BD413 / ADP1).